A 244-amino-acid chain; its full sequence is tRNA pseudouridine synthase A (244 aa).

D52 functions as the Nucleophile in the catalytic mechanism. Y110 contributes to the substrate binding site.

Belongs to the tRNA pseudouridine synthase TruA family. Homodimer.

The catalysed reaction is uridine(38/39/40) in tRNA = pseudouridine(38/39/40) in tRNA. Its function is as follows. Formation of pseudouridine at positions 38, 39 and 40 in the anticodon stem and loop of transfer RNAs. The protein is tRNA pseudouridine synthase A of Caldicellulosiruptor saccharolyticus (strain ATCC 43494 / DSM 8903 / Tp8T 6331).